A 4043-amino-acid polypeptide reads, in one-letter code: Hybrid PKS-NRPS synthetase thnA (4043 aa).

The 435-residue stretch at 6-440 (LEPIAIVGSA…GSNAHAILEE (435 aa)) folds into the Ketosynthase family 3 (KS3) domain. Residues Cys-179, His-319, and His-360 each act as for beta-ketoacyl synthase activity in the active site. Residues 558 to 894 (VFTGQGAQWA…FSDALGFVWT (337 aa)) form a malonyl-CoA:ACP transacylase (MAT) domain region. An N-terminal hotdog fold region spans residues 952-1090 (HEILGTILPE…ATVKIILGTP (139 aa)). Positions 952–1256 (HEILGTILPE…LSIKTFAPAT (305 aa)) are dehydratase (DH) domain. The 307-residue stretch at 952-1258 (HEILGTILPE…IKTFAPATQA (307 aa)) folds into the PKS/mFAS DH domain. The Proton acceptor; for dehydratase activity role is filled by His-984. The interval 1105–1258 (LFPIDADRFY…IKTFAPATQA (154 aa)) is C-terminal hotdog fold. The active-site Proton donor; for dehydratase activity is the Asp-1166. The methyltransferase (MT) domain stretch occupies residues 1417–1591 (LASMMKQITH…RKAGFAGVDA (175 aa)). The tract at residues 2146-2320 (TYLLVGLTGK…GSTFDIGQVA (175 aa)) is ketoreductase (KR) domain. One can recognise a Carrier 1 domain in the interval 2434–2512 (EQALDILKEC…ELCDRVVDKL (79 aa)). Ser-2472 is subject to O-(pantetheine 4'-phosphoryl)serine. Positions 2521–2618 (GKQGESQPPA…PPPPEPAVER (98 aa)) are disordered. Positions 2527-2536 (QPPASTAQPQ) are enriched in low complexity. Over residues 2537–2547 (PVAPKPKPLPV) the composition is skewed to pro residues. A compositionally biased stretch (polar residues) spans 2578-2605 (YSATEASTRSGSPSEATRLSQKVSSKLQ). The interval 2626 to 3067 (IKSVPISLGQ…IPRFSEKQLA (442 aa)) is condensation (C) domain. Positions 3092–3496 (QVARENPDKV…GTMVFHSRMA (405 aa)) are adenylation (A) domain. A Carrier 2 domain is found at 3614 to 3695 (TELTETMIQL…EMAQKVEETI (82 aa)). Ser-3655 carries the post-translational modification O-(pantetheine 4'-phosphoryl)serine. Residues 3736 to 3954 (ITGATGFLSK…DMLPAVLTAQ (219 aa)) are reductase (R) domain.

The protein in the C-terminal section; belongs to the NRP synthetase family.

It catalyses the reaction malate + 6 malonyl-CoA + acetyl-CoA + 2 AH2 + 2 S-adenosyl-L-methionine + 5 NADPH + 9 H(+) = trihazone A + 2 A + 2 S-adenosyl-L-homocysteine + 6 CO2 + 5 NADP(+) + 7 CoA + 6 H2O. It participates in secondary metabolite biosynthesis. Hybrid PKS-NRPS synthetase; part of the gene cluster that produces the tetronate natural products trihazones. The PKS-NRPS synthetase thnA with the help of the trans-enoyl reductase thnE are responsible for the synthesis of the carboxylmethyl containing trihazone A. The PKS portion of thnA synthesizes beta-keto-triene chain from one acetyl-CoA and 6 equivalents of malonyl-CoA, in collaboration with thnE, which selectively reduces the enoyl intermediate during the first and fourth iteration of the PKS. The NRPS domain selects and activates malate, of which the alpha-hydroxyl group attacks the completed polyketide acyl-S-ACP chain to form the ester product. Intramolecular Dieckmann cyclization catalyzed by the terminal reductase domain releases the product as trihazone A from the PKS-NPRS. The pathway begins with the formation of trihazone A by the hybrid PKS-NRPS synthetase thnA and the trans-enoyl reductase thnE. Trihazone A is further decarboxylated by the 2-oxoglutarate-dependent dioxygenase thnC to produce trihazone D. The function of the FAD-dependent monooxygenase thnD has still to be identified. This Trichoderma harzianum (Hypocrea lixii) protein is Hybrid PKS-NRPS synthetase thnA.